A 156-amino-acid polypeptide reads, in one-letter code: Protein GLUTAMINE DUMPER 4 (156 aa).

Residues 1–39 (MRPLSIKPTSLDVARHATSVESFGNHRPPISPWHSPVPY) are Extracellular-facing. Residues 40–60 (LFGGLAAMLGLIAFALLILAC) traverse the membrane as a helical segment. Over 61-156 (SYWRLSTSGD…AKENEETTSQ (96 aa)) the chain is Cytoplasmic. The segment at 67–87 (TSGDDSGERVDEEKESRSGVK) is disordered. Over residues 72 to 84 (SGERVDEEKESRS) the composition is skewed to basic and acidic residues. The short motif at 99 to 103 (VIMAG) is the VIMAG element. The segment at 136-156 (AGEEKMGDREKAKENEETTSQ) is disordered.

Belongs to the GLUTAMINE DUMPER 1 (TC 9.B.60) family. In terms of tissue distribution, expressed in the vascular tissues, even in the minor veins of the leaves.

Its subcellular location is the membrane. Its function is as follows. Probable subunit of an amino acid transporter involved in the regulation of the amino acid metabolism. Stimulates amino acid export by activating nonselective amino acid facilitators. In Arabidopsis thaliana (Mouse-ear cress), this protein is Protein GLUTAMINE DUMPER 4 (GDU4).